Reading from the N-terminus, the 351-residue chain is Anthranilate phosphoribosyltransferase (351 aa).

5-phospho-alpha-D-ribose 1-diphosphate is bound by residues G85, 88-89 (GD), S93, 95-98 (NIST), 113-121 (KHGNRAASS), and T125. Position 85 (G85) interacts with anthranilate. S97 lines the Mg(2+) pocket. Residue N116 participates in anthranilate binding. Residue R171 participates in anthranilate binding. 2 residues coordinate Mg(2+): D229 and E230.

Belongs to the anthranilate phosphoribosyltransferase family. In terms of assembly, homodimer. Mg(2+) is required as a cofactor.

It catalyses the reaction N-(5-phospho-beta-D-ribosyl)anthranilate + diphosphate = 5-phospho-alpha-D-ribose 1-diphosphate + anthranilate. Its pathway is amino-acid biosynthesis; L-tryptophan biosynthesis; L-tryptophan from chorismate: step 2/5. Functionally, catalyzes the transfer of the phosphoribosyl group of 5-phosphorylribose-1-pyrophosphate (PRPP) to anthranilate to yield N-(5'-phosphoribosyl)-anthranilate (PRA). The chain is Anthranilate phosphoribosyltransferase from Saccharopolyspora erythraea (strain ATCC 11635 / DSM 40517 / JCM 4748 / NBRC 13426 / NCIMB 8594 / NRRL 2338).